The chain runs to 263 residues: Proteasome subunit beta type-4 (263 aa).

Met-1 is modified (N-acetylmethionine). Residues 1 to 44 (MEAFWESRTGHWAGGPAPGQFYRVPSTPSCLMDPMSAPARPITR) constitute a propeptide that is removed on maturation. Ser-26 is modified (phosphoserine). The residue at position 101 (Tyr-101) is a Phosphotyrosine.

Belongs to the peptidase T1B family. As to quaternary structure, the 26S proteasome consists of a 20S proteasome core and two 19S regulatory subunits. The 20S proteasome core is a barrel-shaped complex made of 28 subunits that are arranged in four stacked rings. The two outer rings are each formed by seven alpha subunits, and the two inner rings are formed by seven beta subunits. The proteolytic activity is exerted by three beta-subunits PSMB5, PSMB6 and PSMB7. Forms a ternary complex with SMAD1 and OAZ1 before PSMB4 is incorporated into the 20S proteasome. Interacts with PRPF19.

The protein localises to the cytoplasm. Its subcellular location is the nucleus. Non-catalytic component of the 20S core proteasome complex involved in the proteolytic degradation of most intracellular proteins. This complex plays numerous essential roles within the cell by associating with different regulatory particles. Associated with two 19S regulatory particles, forms the 26S proteasome and thus participates in the ATP-dependent degradation of ubiquitinated proteins. The 26S proteasome plays a key role in the maintenance of protein homeostasis by removing misfolded or damaged proteins that could impair cellular functions, and by removing proteins whose functions are no longer required. Associated with the PA200 or PA28, the 20S proteasome mediates ubiquitin-independent protein degradation. This type of proteolysis is required in several pathways including spermatogenesis (20S-PA200 complex) or generation of a subset of MHC class I-presented antigenic peptides (20S-PA28 complex). SMAD1/OAZ1/PSMB4 complex mediates the degradation of the CREBBP/EP300 repressor SNIP1. The polypeptide is Proteasome subunit beta type-4 (Psmb4) (Rattus norvegicus (Rat)).